Consider the following 87-residue polypeptide: Developmentally-regulated ectodermal protein (87 aa).

A signal peptide spans 1–16 (MKRLLVLTLVSAILMA).

The polypeptide is Developmentally-regulated ectodermal protein (Tripneustes gratilla (Hawaian sea urchin)).